The chain runs to 469 residues: Adenosylhomocysteinase (469 aa).

Substrate is bound by residues threonine 60, aspartate 135, and glutamate 195. 196 to 198 (TTT) provides a ligand contact to NAD(+). Substrate contacts are provided by lysine 225 and aspartate 229. NAD(+) contacts are provided by residues asparagine 230, 259–264 (GYGDVG), glutamate 282, asparagine 317, 338–340 (IGH), and asparagine 383.

The protein belongs to the adenosylhomocysteinase family. It depends on NAD(+) as a cofactor.

The protein localises to the cytoplasm. It catalyses the reaction S-adenosyl-L-homocysteine + H2O = L-homocysteine + adenosine. It participates in amino-acid biosynthesis; L-homocysteine biosynthesis; L-homocysteine from S-adenosyl-L-homocysteine: step 1/1. May play a key role in the regulation of the intracellular concentration of adenosylhomocysteine. In Hyphomonas neptunium (strain ATCC 15444), this protein is Adenosylhomocysteinase.